The chain runs to 205 residues: MNPNLNIEQDNASEIVAGVDEAGRGPLAGPVVAAAVVVNQSIMIDDIKDSKVLSKSKRESCYDKITNSYYYSIGIASVQEIDKYNILEATKLACIRAVKNLAIIPTKVLVDGNMNFTDNRFISIVRGDQICYSISSASIVAKVTRDRIMQILHKEYPVYGWNQNCGYGTKLHIDAIKTYGQTIHHRVSFKFKGNINHSAILGNMV.

Residues 14-201 form the RNase H type-2 domain; sequence EIVAGVDEAG…KGNINHSAIL (188 aa). Positions 20, 21, and 111 each coordinate a divalent metal cation.

The protein belongs to the RNase HII family. It depends on Mn(2+) as a cofactor. Requires Mg(2+) as cofactor.

It is found in the cytoplasm. The catalysed reaction is Endonucleolytic cleavage to 5'-phosphomonoester.. Its function is as follows. Endonuclease that specifically degrades the RNA of RNA-DNA hybrids. The protein is Ribonuclease HII of Orientia tsutsugamushi (strain Boryong) (Rickettsia tsutsugamushi).